Reading from the N-terminus, the 702-residue chain is Amino-acid racemase (702 aa).

The Cytoplasmic portion of the chain corresponds to 1–12 (MKHRANGIDLFR). A helical membrane pass occupies residues 13–33 (IFAATMVVAIHTFPFQSIAPF). Residues 34-39 (LDEVIT) lie on the Extracellular side of the membrane. A helical transmembrane segment spans residues 40–60 (LTVFRVAVPFFFMITGYFLLG). Residues 61 to 77 (RLSLNFSYNNNQRVKKY) lie on the Cytoplasmic side of the membrane. The helical transmembrane segment at 78-98 (LYKIGMIYLYSILLYFPLSLL) threads the bilayer. Over 99-120 (NGTISLKMNILLLLKVFIFDGT) the chain is Extracellular. A helical membrane pass occupies residues 121-141 (FYHLWYFPASIIGTILVTLLL). A topological domain (cytoplasmic) is located at residue arginine 142. The chain crosses the membrane as a helical span at residues 143–163 (SIGFKLTVAFSTCLYLVGLGG). Residues 164-191 (DSWYGITNQVPLLNKLYTFIFSWSDYTR) are Extracellular-facing. Residues 192–212 (SGVFFTPVFLCLGIFAYRVSK) form a helical membrane-spanning segment. Residues 213 to 218 (KLTASK) lie on the Cytoplasmic side of the membrane. Residues 219–239 (ILNLLFYVFIIGMTFESIFLH) form a helical membrane-spanning segment. At 240 to 248 (RFTNVKHDS) the chain is on the extracellular side. The helical transmembrane segment at 249 to 269 (MYLLLPSCALILFLMLLNWQP) threads the bilayer. Residues 270 to 276 (KLKVKES) are Cytoplasmic-facing. Residues 277-297 (ADLTLLVYILHPLVIVIVHSI) traverse the membrane as a helical segment. At 298–307 (SKYIPILKNS) the chain is on the extracellular side. A helical membrane pass occupies residues 308–328 (LLNFLLVVVCSFILAQLLLNL). At 329–702 (KRKLRVSKQK…LGSRLGTELN (374 aa)) the chain is on the cytoplasmic side. The tract at residues 337–702 (QKIPFERASK…LGSRLGTELN (366 aa)) is racemase. The Proton acceptor role is filled by lysine 375. An N6-(pyridoxal phosphate)lysine modification is found at lysine 375. Position 469 (arginine 469) interacts with substrate. Tyrosine 601 serves as the catalytic Proton acceptor. Residue methionine 650 participates in substrate binding.

It in the N-terminal section; belongs to the acyltransferase 3 family. In the C-terminal section; belongs to the alanine racemase family. The cofactor is pyridoxal 5'-phosphate.

Its subcellular location is the cell membrane. This is Amino-acid racemase (vanTE) from Enterococcus faecalis (Streptococcus faecalis).